The primary structure comprises 348 residues: UDP-glucose 4-epimerase (348 aa).

Residues 12–14, 33–37, 66–67, Phe-88, and Lys-92 each bind NAD(+); these read GYI, DNFHN, and DI. 132-134 lines the substrate pocket; sequence SAT. Catalysis depends on Tyr-157, which acts as the Proton acceptor. NAD(+) is bound by residues Lys-161 and Tyr-185. Substrate-binding positions include 185-187, 206-208, 224-226, Arg-239, and 300-303; these read YFN, NNL, NVF, and REGD.

This sequence belongs to the NAD(P)-dependent epimerase/dehydratase family. As to quaternary structure, homodimer. Requires NAD(+) as cofactor.

The enzyme catalyses UDP-alpha-D-glucose = UDP-alpha-D-galactose. The catalysed reaction is UDP-N-acetyl-alpha-D-glucosamine = UDP-N-acetyl-alpha-D-galactosamine. It participates in carbohydrate metabolism; galactose metabolism. Catalyzes two distinct but analogous reactions: the reversible epimerization of UDP-glucose to UDP-galactose and the reversible epimerization of UDP-N-acetylglucosamine to UDP-N-acetylgalactosamine. The reaction with UDP-Gal plays a critical role in the Leloir pathway of galactose catabolism in which galactose is converted to the glycolytic intermediate glucose 6-phosphate. It contributes to the catabolism of dietary galactose and enables the endogenous biosynthesis of both UDP-Gal and UDP-GalNAc when exogenous sources are limited. Both UDP-sugar interconversions are important in the synthesis of glycoproteins and glycolipids. The protein is UDP-glucose 4-epimerase of Bos taurus (Bovine).